Reading from the N-terminus, the 264-residue chain is 3-methyl-2-oxobutanoate hydroxymethyltransferase (264 aa).

Asp45 and Asp84 together coordinate Mg(2+). 3-methyl-2-oxobutanoate contacts are provided by residues 45 to 46 (DS), Asp84, and Lys112. Glu114 contacts Mg(2+). The active-site Proton acceptor is Glu181.

The protein belongs to the PanB family. As to quaternary structure, homodecamer; pentamer of dimers. Mg(2+) is required as a cofactor.

Its subcellular location is the cytoplasm. The catalysed reaction is 3-methyl-2-oxobutanoate + (6R)-5,10-methylene-5,6,7,8-tetrahydrofolate + H2O = 2-dehydropantoate + (6S)-5,6,7,8-tetrahydrofolate. The protein operates within cofactor biosynthesis; (R)-pantothenate biosynthesis; (R)-pantoate from 3-methyl-2-oxobutanoate: step 1/2. Functionally, catalyzes the reversible reaction in which hydroxymethyl group from 5,10-methylenetetrahydrofolate is transferred onto alpha-ketoisovalerate to form ketopantoate. This chain is 3-methyl-2-oxobutanoate hydroxymethyltransferase, found in Aliivibrio fischeri (strain MJ11) (Vibrio fischeri).